The following is a 262-amino-acid chain: Ribosomal RNA small subunit methyltransferase A (262 aa).

Positions 14, 16, 41, 62, 87, and 109 each coordinate S-adenosyl-L-methionine.

Belongs to the class I-like SAM-binding methyltransferase superfamily. rRNA adenine N(6)-methyltransferase family. RsmA subfamily.

The protein localises to the cytoplasm. The enzyme catalyses adenosine(1518)/adenosine(1519) in 16S rRNA + 4 S-adenosyl-L-methionine = N(6)-dimethyladenosine(1518)/N(6)-dimethyladenosine(1519) in 16S rRNA + 4 S-adenosyl-L-homocysteine + 4 H(+). Its function is as follows. Specifically dimethylates two adjacent adenosines (A1518 and A1519) in the loop of a conserved hairpin near the 3'-end of 16S rRNA in the 30S particle. May play a critical role in biogenesis of 30S subunits. This chain is Ribosomal RNA small subunit methyltransferase A, found in Francisella tularensis subsp. tularensis (strain FSC 198).